Consider the following 439-residue polypeptide: MHKVTKFAIRHLSDKASRFVPKAGVYPKGYAVGGIHCGVKKDGKSLDLAILQNTFGKNASAAGVFTVNKFKAAPVQVSKKILKEKSGSGINSFVINSGNANAVTGAQGMKDAEDMVLVTDSVLENPTNSSLVMSTGVIGNNLPIDKILGGIPKLASQHLGNTHQHWIDCATAICTTDTFPKLVTKRFSIGDDTYTLAGLCKGAGMICPNMATLLGFFVTDAPVTPSALQQILKYAVDRSFNSITVDGDMSTNDTIVAMANGAAGGEVIDNTSSCAERYSRLQAEIVDFAQQLAQLVVRDGEGATKFITIRVKDALSYKDAKSIASSIANSSLFKTAMYGKDANWGRILCAIGYADVTSANSVIPEKTSVKFVPVDGSEHLNLLVNGEPEQVDEERASEILQNEDLIVEINLGTNGGQSADFWTCDLSHEYVTINGDYRS.

Residues Thr175, Lys201, Thr212, Glu301, Asn434, and Ser439 each coordinate substrate. Thr212 acts as the Nucleophile in catalysis.

The protein belongs to the ArgJ family. As to quaternary structure, heterodimer of an alpha and a beta chain. The alpha and beta chains are autoproteolytically processed from a single precursor protein within the mitochondrion.

The protein resides in the mitochondrion matrix. The enzyme catalyses N(2)-acetyl-L-ornithine + L-glutamate = N-acetyl-L-glutamate + L-ornithine. It carries out the reaction L-glutamate + acetyl-CoA = N-acetyl-L-glutamate + CoA + H(+). It participates in amino-acid biosynthesis; L-arginine biosynthesis; L-ornithine and N-acetyl-L-glutamate from L-glutamate and N(2)-acetyl-L-ornithine (cyclic): step 1/1. The protein operates within amino-acid biosynthesis; L-arginine biosynthesis; N(2)-acetyl-L-ornithine from L-glutamate: step 1/4. Functionally, catalyzes two activities which are involved in the cyclic version of arginine biosynthesis: the synthesis of acetylglutamate from glutamate and acetyl-CoA, and of ornithine by transacetylation between acetylornithine and glutamate. This is Arginine biosynthesis bifunctional protein ArgJ, mitochondrial from Candida albicans (strain WO-1) (Yeast).